The following is a 91-amino-acid chain: Small ribosomal subunit protein uS19 (91 aa).

The protein belongs to the universal ribosomal protein uS19 family.

Its function is as follows. Protein S19 forms a complex with S13 that binds strongly to the 16S ribosomal RNA. The protein is Small ribosomal subunit protein uS19 of Syntrophotalea carbinolica (strain DSM 2380 / NBRC 103641 / GraBd1) (Pelobacter carbinolicus).